The sequence spans 551 residues: Oleuropein beta-glucosidase (551 aa).

Polar residues predominate over residues 1–27 (MDIQSNVLTITSGSTPTDTSSNGQAAK). The segment at 1–33 (MDIQSNVLTITSGSTPTDTSSNGQAAKSTKERI) is disordered. A beta-D-glucoside contacts are provided by residues Q52, H156, 201-202 (NE), Y363, E433, W482, 489-490 (EW), and F498. Catalysis depends on E202, which acts as the Proton donor. Residue E433 is the Nucleophile of the active site. Residues 502-551 (YVDYANGRYTRLPKRSAVWWRNFLTKPTAVPLKNEPEKSEDRRKRLRGST) are required for the homomultimerization. A disordered region spans residues 532–551 (PLKNEPEKSEDRRKRLRGST). Residues 535 to 544 (NEPEKSEDRR) show a composition bias toward basic and acidic residues. Positions 542–550 (DRRKRLRGS) match the Nuclear localization signal motif.

The protein belongs to the glycosyl hydrolase 1 family. As to quaternary structure, homomultimer. Native form of the enzyme requires at least an octamer conformation. As to expression, expressed in expanding leaves and in young drupes, mostly in the developing seed coat tissues, the perisperm and the mesocarp. Also detected in shoot and root meristems, flower buds, developing ovaries and tapetal cells of the anther. Not detected in embryos or endosperm, or in leaf trichomes.

The protein resides in the nucleus. The catalysed reaction is oleuropein + H2O = oleuropein aglycone + D-glucose. In terms of biological role, major beta-glucosidase activating oleuropein into a potent protein cross-linking agent. No activity with rutin, luteolin or p-nitrophenyl-beta-glucopyranoside as substrates. In Olea europaea (Common olive), this protein is Oleuropein beta-glucosidase.